Consider the following 215-residue polypeptide: Probable transaldolase (215 aa).

The Schiff-base intermediate with substrate role is filled by Lys83.

The protein belongs to the transaldolase family. Type 3B subfamily.

Its subcellular location is the cytoplasm. It carries out the reaction D-sedoheptulose 7-phosphate + D-glyceraldehyde 3-phosphate = D-erythrose 4-phosphate + beta-D-fructose 6-phosphate. The protein operates within carbohydrate degradation; pentose phosphate pathway; D-glyceraldehyde 3-phosphate and beta-D-fructose 6-phosphate from D-ribose 5-phosphate and D-xylulose 5-phosphate (non-oxidative stage): step 2/3. Transaldolase is important for the balance of metabolites in the pentose-phosphate pathway. This Clostridium perfringens (strain ATCC 13124 / DSM 756 / JCM 1290 / NCIMB 6125 / NCTC 8237 / Type A) protein is Probable transaldolase.